The primary structure comprises 215 residues: Small ribosomal subunit protein eS1 (215 aa).

Belongs to the eukaryotic ribosomal protein eS1 family.

This Halorubrum lacusprofundi (strain ATCC 49239 / DSM 5036 / JCM 8891 / ACAM 34) protein is Small ribosomal subunit protein eS1.